The chain runs to 178 residues: Probable chorismate pyruvate-lyase (178 aa).

The substrate site is built by Arg73, Leu111, and Glu163.

Belongs to the UbiC family.

It localises to the cytoplasm. It carries out the reaction chorismate = 4-hydroxybenzoate + pyruvate. It functions in the pathway cofactor biosynthesis; ubiquinone biosynthesis. In terms of biological role, removes the pyruvyl group from chorismate, with concomitant aromatization of the ring, to provide 4-hydroxybenzoate (4HB) for the ubiquinone pathway. The polypeptide is Probable chorismate pyruvate-lyase (Pseudomonas aeruginosa (strain ATCC 15692 / DSM 22644 / CIP 104116 / JCM 14847 / LMG 12228 / 1C / PRS 101 / PAO1)).